Reading from the N-terminus, the 186-residue chain is Large ribosomal subunit protein uL22 (186 aa).

Belongs to the universal ribosomal protein uL22 family. Component of the large ribosomal subunit (LSU). Mature N.crassa ribosomes consist of a small (40S) and a large (60S) subunit. The 40S small subunit contains 1 molecule of ribosomal RNA (18S rRNA) and at least 32 different proteins. The large 60S subunit contains 3 rRNA molecules (26S, 5.8S and 5S rRNA) and at least 42 different proteins.

Its subcellular location is the cytoplasm. Functionally, component of the ribosome, a large ribonucleoprotein complex responsible for the synthesis of proteins in the cell. The small ribosomal subunit (SSU) binds messenger RNAs (mRNAs) and translates the encoded message by selecting cognate aminoacyl-transfer RNA (tRNA) molecules. The large subunit (LSU) contains the ribosomal catalytic site termed the peptidyl transferase center (PTC), which catalyzes the formation of peptide bonds, thereby polymerizing the amino acids delivered by tRNAs into a polypeptide chain. The nascent polypeptides leave the ribosome through a tunnel in the LSU and interact with protein factors that function in enzymatic processing, targeting, and the membrane insertion of nascent chains at the exit of the ribosomal tunnel. This chain is Large ribosomal subunit protein uL22 (rpl-17), found in Neurospora crassa (strain ATCC 24698 / 74-OR23-1A / CBS 708.71 / DSM 1257 / FGSC 987).